Reading from the N-terminus, the 626-residue chain is Phosphomethylpyrimidine synthase (626 aa).

The interval 1–27 (MSKQEKAISLSESAQVDQQSVQPLPNS) is disordered. The segment covering 10 to 25 (LSESAQVDQQSVQPLP) has biased composition (polar residues). Residues Asn232, Met261, Tyr290, His326, 346-348 (SRG), 387-390 (DGLR), and Glu426 each bind substrate. His430 is a binding site for Zn(2+). Tyr453 lines the substrate pocket. His494 is a Zn(2+) binding site. Residues Cys574, Cys577, and Cys582 each coordinate [4Fe-4S] cluster.

The protein belongs to the ThiC family. As to quaternary structure, homodimer. It depends on [4Fe-4S] cluster as a cofactor.

It catalyses the reaction 5-amino-1-(5-phospho-beta-D-ribosyl)imidazole + S-adenosyl-L-methionine = 4-amino-2-methyl-5-(phosphooxymethyl)pyrimidine + CO + 5'-deoxyadenosine + formate + L-methionine + 3 H(+). It functions in the pathway cofactor biosynthesis; thiamine diphosphate biosynthesis. In terms of biological role, catalyzes the synthesis of the hydroxymethylpyrimidine phosphate (HMP-P) moiety of thiamine from aminoimidazole ribotide (AIR) in a radical S-adenosyl-L-methionine (SAM)-dependent reaction. The polypeptide is Phosphomethylpyrimidine synthase (Pseudomonas entomophila (strain L48)).